The following is a 38-amino-acid chain: IEAIRCGGSRDCYRPCQKRTGCPNAKCINKTCKCYGCS.

4 disulfides stabilise this stretch: Cys-6-Cys-27, Cys-12-Cys-32, Cys-16-Cys-34, and Cys-22-Cys-37.

It belongs to the short scorpion toxin superfamily. Potassium channel inhibitor family. Alpha-KTx 06 subfamily. Expressed by the venom gland.

It localises to the secreted. In terms of biological role, potently, completely and reversibly blocks voltage-gated potassium channel Kv1.2/KCNA2 and Shaker B (Sh). Also blocks small conductance (SK) calcium-activated potassium channel (KCNN). This is Potassium channel toxin alpha-KTx 6.4 from Pandinus imperator (Emperor scorpion).